The primary structure comprises 321 residues: ATP-dependent 6-phosphofructokinase (321 aa).

Position 12 (G12) interacts with ATP. 22 to 26 (RGVVR) provides a ligand contact to ADP. Residues 73–74 (RF) and 103–106 (GDGS) each bind ATP. Residue D104 coordinates Mg(2+). Residue 127 to 129 (TID) participates in substrate binding. The active-site Proton acceptor is D129. Residue R156 coordinates ADP. Residues R164 and 171–173 (MGR) contribute to the substrate site. ADP is bound by residues 187-189 (GCE), K213, and 215-217 (KRH). Residues E224, R245, and 251–254 (HTQR) each bind substrate.

The protein belongs to the phosphofructokinase type A (PFKA) family. ATP-dependent PFK group I subfamily. Prokaryotic clade 'B1' sub-subfamily. In terms of assembly, homotetramer. It depends on Mg(2+) as a cofactor.

Its subcellular location is the cytoplasm. The enzyme catalyses beta-D-fructose 6-phosphate + ATP = beta-D-fructose 1,6-bisphosphate + ADP + H(+). It functions in the pathway carbohydrate degradation; glycolysis; D-glyceraldehyde 3-phosphate and glycerone phosphate from D-glucose: step 3/4. With respect to regulation, allosterically activated by ADP and other diphosphonucleosides, and allosterically inhibited by phosphoenolpyruvate. In terms of biological role, catalyzes the phosphorylation of D-fructose 6-phosphate to fructose 1,6-bisphosphate by ATP, the first committing step of glycolysis. The chain is ATP-dependent 6-phosphofructokinase from Glaesserella parasuis serovar 5 (strain SH0165) (Haemophilus parasuis).